The following is a 738-amino-acid chain: 1,4-alpha-glucan branching enzyme GlgB (738 aa).

The active-site Nucleophile is D399. E452 serves as the catalytic Proton donor.

Belongs to the glycosyl hydrolase 13 family. GlgB subfamily. In terms of assembly, monomer.

It carries out the reaction Transfers a segment of a (1-&gt;4)-alpha-D-glucan chain to a primary hydroxy group in a similar glucan chain.. The protein operates within glycan biosynthesis; glycogen biosynthesis. Functionally, catalyzes the formation of the alpha-1,6-glucosidic linkages in glycogen by scission of a 1,4-alpha-linked oligosaccharide from growing alpha-1,4-glucan chains and the subsequent attachment of the oligosaccharide to the alpha-1,6 position. The sequence is that of 1,4-alpha-glucan branching enzyme GlgB from Chlamydia trachomatis serovar L2 (strain ATCC VR-902B / DSM 19102 / 434/Bu).